The primary structure comprises 371 residues: tRNA-specific 2-thiouridylase MnmA (371 aa).

ATP contacts are provided by residues 9–16 (AMSGGVDS) and methionine 35. Cysteine 109 serves as the catalytic Nucleophile. Cysteine 109 and cysteine 207 are disulfide-bonded. Residue glycine 133 participates in ATP binding. Residues 157–159 (KDQ) are interaction with tRNA. Cysteine 207 functions as the Cysteine persulfide intermediate in the catalytic mechanism.

It belongs to the MnmA/TRMU family.

It is found in the cytoplasm. It carries out the reaction S-sulfanyl-L-cysteinyl-[protein] + uridine(34) in tRNA + AH2 + ATP = 2-thiouridine(34) in tRNA + L-cysteinyl-[protein] + A + AMP + diphosphate + H(+). Functionally, catalyzes the 2-thiolation of uridine at the wobble position (U34) of tRNA, leading to the formation of s(2)U34. In Solibacter usitatus (strain Ellin6076), this protein is tRNA-specific 2-thiouridylase MnmA.